We begin with the raw amino-acid sequence, 309 residues long: Phytoene synthase (309 aa).

It belongs to the phytoene/squalene synthase family.

The enzyme catalyses 2 (2E,6E,10E)-geranylgeranyl diphosphate = 15-cis-phytoene + 2 diphosphate. Its pathway is carotenoid biosynthesis; phytoene biosynthesis; all-trans-phytoene from geranylgeranyl diphosphate: step 1/1. Its function is as follows. Catalyzes the reaction from prephytoene diphosphate to phytoene. The sequence is that of Phytoene synthase (crtB) from Arthrospira platensis (Spirulina platensis).